The sequence spans 150 residues: Ribonuclease H (150 aa).

The RNase H type-1 domain maps to 1–142; sequence MSDSVEIFTD…ADQLANRGVD (142 aa). 4 residues coordinate Mg(2+): D10, E48, D70, and D134.

This sequence belongs to the RNase H family. As to quaternary structure, monomer. Requires Mg(2+) as cofactor.

The protein localises to the cytoplasm. It catalyses the reaction Endonucleolytic cleavage to 5'-phosphomonoester.. Endonuclease that specifically degrades the RNA of RNA-DNA hybrids. The polypeptide is Ribonuclease H (Pseudomonas fluorescens (strain ATCC BAA-477 / NRRL B-23932 / Pf-5)).